The sequence spans 318 residues: Malonyl-S-ACP:biotin-protein carboxyltransferase MADC (318 aa).

Residues 2 to 257 (AKWTELQDKS…VLQKPMEEIE (256 aa)) enclose the CoA carboxyltransferase N-terminal domain.

It is found in the cytoplasm. The enzyme catalyses N(6)-biotinyl-L-lysyl-[protein] + malonyl-[ACP] = N(6)-carboxybiotinyl-L-lysyl-[protein] + acetyl-[ACP]. Its function is as follows. Gamma subunit of the biotin-dependent malonate decarboxylase multienzyme complex (EC 7.2.4.4). The two subunits MADC and MADD are required for the transfer of the malonate carboxy group from the acyl-carrier protein (ACP) to the prosthetic group of the biotin carrier MADF. Required for the regeneration of ACP. The chain is Malonyl-S-ACP:biotin-protein carboxyltransferase MADC (madC) from Malonomonas rubra.